Consider the following 343-residue polypeptide: Phenylalanine--tRNA ligase alpha subunit (343 aa).

Residue Glu264 participates in Mg(2+) binding.

This sequence belongs to the class-II aminoacyl-tRNA synthetase family. Phe-tRNA synthetase alpha subunit type 1 subfamily. In terms of assembly, tetramer of two alpha and two beta subunits. Mg(2+) serves as cofactor.

Its subcellular location is the cytoplasm. The enzyme catalyses tRNA(Phe) + L-phenylalanine + ATP = L-phenylalanyl-tRNA(Phe) + AMP + diphosphate + H(+). The sequence is that of Phenylalanine--tRNA ligase alpha subunit from Aromatoleum aromaticum (strain DSM 19018 / LMG 30748 / EbN1) (Azoarcus sp. (strain EbN1)).